The chain runs to 335 residues: V-set and immunoglobulin domain-containing protein 1 (335 aa).

Residues 1–21 (MFPTMLKIFPILATLAGHVHG) form the signal peptide. In terms of domain architecture, Ig-like V-type spans 22-136 (VVVTVPEKTV…SQKSVIVNVL (115 aa)). The Extracellular segment spans residues 22-233 (VVVTVPEKTV…DLTSMHSDGN (212 aa)). Disulfide bonds link cysteine 43–cysteine 115 and cysteine 160–cysteine 210. One can recognise an Ig-like C2-type domain in the interval 139–226 (PSKPFCKIEG…GNSTCELDLT (88 aa)). The helical transmembrane segment at 234-254 (IVAGALIGAILAAVIICAIVW) threads the bilayer. The Cytoplasmic segment spans residues 255–335 (VLTKKAKKKK…QKEETAGSSF (81 aa)). The interval 266–335 (SSNEMQVMAQ…QKEETAGSSF (70 aa)) is disordered. The span at 268 to 306 (NEMQVMAQKQSNAEYAQVPNEENTPATAVLPSNATNEQP) shows a compositional bias: polar residues. Over residues 319-335 (NDEKHEVQKEETAGSSF) the composition is skewed to basic and acidic residues.

In terms of tissue distribution, expressed in thymocytes.

Its subcellular location is the membrane. This chain is V-set and immunoglobulin domain-containing protein 1 (VSIG1), found in Gallus gallus (Chicken).